A 139-amino-acid chain; its full sequence is D-ribose pyranase (139 aa).

The active-site Proton donor is H20. Substrate-binding positions include D28, H106, and 128 to 130; that span reads YAN.

It belongs to the RbsD / FucU family. RbsD subfamily. In terms of assembly, homodecamer.

The protein resides in the cytoplasm. It carries out the reaction beta-D-ribopyranose = beta-D-ribofuranose. It functions in the pathway carbohydrate metabolism; D-ribose degradation; D-ribose 5-phosphate from beta-D-ribopyranose: step 1/2. In terms of biological role, catalyzes the interconversion of beta-pyran and beta-furan forms of D-ribose. This is D-ribose pyranase from Salmonella arizonae (strain ATCC BAA-731 / CDC346-86 / RSK2980).